A 200-amino-acid polypeptide reads, in one-letter code: uncharacterized protein (200 aa).

This is an uncharacterized protein from Methanocaldococcus jannaschii (strain ATCC 43067 / DSM 2661 / JAL-1 / JCM 10045 / NBRC 100440) (Methanococcus jannaschii).